The primary structure comprises 578 residues: Moesin/ezrin/radixin homolog 1 (578 aa).

The region spanning 1–296 is the FERM domain; sequence MSPKALNVRV…GNHELYMRRR (296 aa). The interval 463-555 is disordered; it reads ASTTPQHHHV…HRENVRQGRD (93 aa). Residues 475 to 484 show a composition bias toward acidic residues; it reads DENENEEELT. Residues 492–555 show a composition bias toward basic and acidic residues; sequence VSRDLDTDEH…HRENVRQGRD (64 aa). T559 carries the phosphothreonine modification.

In terms of assembly, interacts with wgn. Interacts with Mer and arm at the adherens junction. Interacts with cytoskeletal actin at apical buds of microvilli in the precellularised embryo. Interacts with PCID2 (possibly via FERM domain). Post-translationally, phosphorylated on Thr-559. In the oocyte this phosphorylation is induced by phosphatidylinositol 4,5-bisphosphate (PtdIns[4,5]P(2)) generated by sktl.

It localises to the cell junction. The protein localises to the adherens junction. The protein resides in the cell projection. Its subcellular location is the microvillus. It is found in the rhabdomere. It localises to the cell membrane. The protein localises to the cytoplasm. The protein resides in the cytoskeleton. Its subcellular location is the cell cortex. It is found in the cilium. It localises to the flagellum. The protein localises to the nucleus. The protein resides in the nucleoplasm. Its subcellular location is the chromosome. In terms of biological role, involved in connections of major cytoskeletal structures to the plasma membrane. Together with wgn, involved in control of axon targeting of R8 and R2-R5 photoreceptors, independent of egr. In the nucleus, recruited to sites of active transcription by RNA polymerase II where it has a role in nuclear mRNA export together with the mRNA export factor PCID2 and other messenger ribonucleoprotein (mRNP) particles. The polypeptide is Moesin/ezrin/radixin homolog 1 (Moe) (Drosophila melanogaster (Fruit fly)).